The sequence spans 162 residues: Large ribosomal subunit protein bL17 (162 aa).

A disordered region spans residues 126 to 162 (KKEEVKTKSRRGGKAKKAEPTTEAPANTTEETTDSAE). Over residues 146–155 (TTEAPANTTE) the composition is skewed to low complexity.

Belongs to the bacterial ribosomal protein bL17 family. In terms of assembly, part of the 50S ribosomal subunit. Contacts protein L32.

The polypeptide is Large ribosomal subunit protein bL17 (Flavobacterium psychrophilum (strain ATCC 49511 / DSM 21280 / CIP 103535 / JIP02/86)).